Reading from the N-terminus, the 117-residue chain is Protein Turandot F (117 aa).

The first 22 residues, Met-1–Ala-22, serve as a signal peptide directing secretion.

This sequence belongs to the Turandot family.

It localises to the secreted. Functionally, a humoral factor that may play a role in stress tolerance. The polypeptide is Protein Turandot F (Drosophila sechellia (Fruit fly)).